We begin with the raw amino-acid sequence, 353 residues long: DNA polymerase IV (353 aa).

The 185-residue stretch at 14–198 folds into the UmuC domain; sequence IIHIDMDAFF…MDISKFHGVG (185 aa). Mg(2+) is bound by residues Asp18 and Asp116. Glu117 is a catalytic residue.

Belongs to the DNA polymerase type-Y family. As to quaternary structure, monomer. It depends on Mg(2+) as a cofactor.

It localises to the cytoplasm. It catalyses the reaction DNA(n) + a 2'-deoxyribonucleoside 5'-triphosphate = DNA(n+1) + diphosphate. Its function is as follows. Poorly processive, error-prone DNA polymerase involved in untargeted mutagenesis. Copies undamaged DNA at stalled replication forks, which arise in vivo from mismatched or misaligned primer ends. These misaligned primers can be extended by PolIV. Exhibits no 3'-5' exonuclease (proofreading) activity. May be involved in translesional synthesis, in conjunction with the beta clamp from PolIII. The sequence is that of DNA polymerase IV from Streptococcus pneumoniae serotype 2 (strain D39 / NCTC 7466).